The sequence spans 537 residues: Membrane protein insertase YidC (537 aa).

4 helical membrane-spanning segments follow: residues 5–25 (LIIA…IFPT), 353–373 (GNYG…FFPL), 418–438 (VNPL…FGLY), and 495–515 (MLML…GLVI).

Belongs to the OXA1/ALB3/YidC family. Type 1 subfamily. As to quaternary structure, interacts with the Sec translocase complex via SecD. Specifically interacts with transmembrane segments of nascent integral membrane proteins during membrane integration.

The protein localises to the cell inner membrane. Required for the insertion and/or proper folding and/or complex formation of integral membrane proteins into the membrane. Involved in integration of membrane proteins that insert both dependently and independently of the Sec translocase complex, as well as at least some lipoproteins. Aids folding of multispanning membrane proteins. The sequence is that of Membrane protein insertase YidC from Citrifermentans bemidjiense (strain ATCC BAA-1014 / DSM 16622 / JCM 12645 / Bem) (Geobacter bemidjiensis).